A 190-amino-acid chain; its full sequence is Shikimate kinase (190 aa).

13 to 18 is an ATP binding site; the sequence is GSGKTT. A Mg(2+)-binding site is contributed by Thr-17. Substrate is bound by residues Asp-35, Arg-59, and Gly-81. Arg-119 lines the ATP pocket. Residue Arg-138 coordinates substrate. ATP is bound at residue Gln-155.

Belongs to the shikimate kinase family. As to quaternary structure, monomer. Requires Mg(2+) as cofactor.

The protein resides in the cytoplasm. It catalyses the reaction shikimate + ATP = 3-phosphoshikimate + ADP + H(+). The protein operates within metabolic intermediate biosynthesis; chorismate biosynthesis; chorismate from D-erythrose 4-phosphate and phosphoenolpyruvate: step 5/7. In terms of biological role, catalyzes the specific phosphorylation of the 3-hydroxyl group of shikimic acid using ATP as a cosubstrate. This Nitrosococcus oceani (strain ATCC 19707 / BCRC 17464 / JCM 30415 / NCIMB 11848 / C-107) protein is Shikimate kinase.